We begin with the raw amino-acid sequence, 155 residues long: 3-hydroxyacyl-[acyl-carrier-protein] dehydratase FabZ (155 aa).

Residue His-61 is part of the active site.

The protein belongs to the thioester dehydratase family. FabZ subfamily.

It localises to the cytoplasm. It catalyses the reaction a (3R)-hydroxyacyl-[ACP] = a (2E)-enoyl-[ACP] + H2O. Functionally, involved in unsaturated fatty acids biosynthesis. Catalyzes the dehydration of short chain beta-hydroxyacyl-ACPs and long chain saturated and unsaturated beta-hydroxyacyl-ACPs. In Synechococcus elongatus (strain ATCC 33912 / PCC 7942 / FACHB-805) (Anacystis nidulans R2), this protein is 3-hydroxyacyl-[acyl-carrier-protein] dehydratase FabZ.